Here is a 1039-residue protein sequence, read N- to C-terminus: FERM domain-containing protein 4A (1039 aa).

The FERM domain maps to 20–322 (RRCQVHLLDD…SQHQFYLDRK (303 aa)). The interval 358–420 (KGKIISGSSG…KLCLREAELT (63 aa)) is necessary for interaction with CYTH1. Low complexity predominate over residues 366–382 (SGSLLSSGSQESDSSQS). Residues 366–386 (SGSLLSSGSQESDSSQSAKKD) form a disordered region. A coiled-coil region spans residues 382–416 (SAKKDMLAALKSRQEALEETLRQRLEELKKLCLRE). A Phosphoserine modification is found at Ser530. Residues 553 to 680 (DEDSQVTSTI…MPSTPDLRVR (128 aa)) are disordered. Over residues 571-586 (GLPPRPPSHNRPPPPQ) the composition is skewed to pro residues. The necessary for tight junction and adherens junction localization; Requires for interaction with PARD3 stretch occupies residues 579-939 (HNRPPPPQSL…QWYQRSTASH (361 aa)). A phosphoserine mark is found at Ser604 and Ser615. Residues 623 to 638 (VKKRSSHSHSSSHKRF) are compositionally biased toward basic residues. Phosphoserine occurs at positions 681 and 711. 2 disordered regions span residues 713 to 756 (ESQG…HSSS) and 772 to 813 (AEDS…AGGA). The segment covering 788–800 (RAAGALGSASSGS) has biased composition (low complexity). Phosphoserine occurs at positions 800, 872, and 901. Disordered stretches follow at residues 879–968 (FKES…STFV) and 980–1039 (CKAT…STDE). Over residues 896 to 905 (LTPSRSQILR) the composition is skewed to polar residues. Over residues 912–929 (EGAHDKGAGRAAVSDELR) the composition is skewed to basic and acidic residues. The segment covering 946-966 (SHTSSTSSDSGSQYSTSSQST) has biased composition (low complexity). Composition is skewed to polar residues over residues 986–1000 (ALPQ…SSEI) and 1013–1023 (TWQTGEATENS).

Interacts (via coiled-coil domain) with CYTH1 (via coiled-coil domain). Interacts with PARD3 (via coiled-coil domain). Found in a complex with PARD3, CYTH1 and FRMD4A. Interacts with CYTH2. Interacts with CYTH3.

It is found in the cytoplasm. The protein localises to the cytoskeleton. Its subcellular location is the cell junction. It localises to the adherens junction. The protein resides in the tight junction. In terms of biological role, scaffolding protein that regulates epithelial cell polarity by connecting ARF6 activation with the PAR3 complex. Plays a redundant role with FRMD4B in epithelial polarization. May regulate MAPT secretion by activating ARF6-signaling. In Homo sapiens (Human), this protein is FERM domain-containing protein 4A.